The following is a 420-amino-acid chain: tRNA (guanine-N(7)-)-methyltransferase non-catalytic subunit TRM82 (420 aa).

The segment covering 59-68 has biased composition (basic and acidic residues); that stretch reads KENDSKRQKS. Positions 59 to 82 are disordered; that stretch reads KENDSKRQKSESGQAKVSKIPTPG. WD repeat units follow at residues 87-127, 179-220, 224-266, and 340-379; these read PIYN…DNCL, GHVS…VIKN, GHHE…AKIE, and SYED…EETN.

This sequence belongs to the WD repeat TRM82 family. As to quaternary structure, forms a heterodimer with the catalytic subunit TRM8.

The protein localises to the nucleus. It functions in the pathway tRNA modification; N(7)-methylguanine-tRNA biosynthesis. Functionally, required for the formation of N(7)-methylguanine at position 46 (m7G46) in tRNA. In the complex, it is required to stabilize and induce conformational changes of the catalytic subunit. This Meyerozyma guilliermondii (strain ATCC 6260 / CBS 566 / DSM 6381 / JCM 1539 / NBRC 10279 / NRRL Y-324) (Yeast) protein is tRNA (guanine-N(7)-)-methyltransferase non-catalytic subunit TRM82.